The primary structure comprises 167 residues: N-alpha-acetyltransferase (167 aa).

Positions 12 to 167 (YRIRNARLTD…EDAYLMAAPL (156 aa)) constitute an N-acetyltransferase domain. Tyrosine 37 provides a ligand contact to substrate. Histidine 88 lines the Zn(2+) pocket. Acetyl-CoA contacts are provided by residues 92–94 (IAV) and 100–105 (RLGIGT). Glutamate 127 is a Zn(2+) binding site. Residues asparagine 132 and 139–141 (YKK) each bind acetyl-CoA. Substrate is bound at residue tyrosine 154.

It belongs to the acetyltransferase family. ARD1 subfamily. Homodimer.

It is found in the cytoplasm. The enzyme catalyses N-terminal L-alanyl-[protein] + acetyl-CoA = N-terminal N(alpha)-acetyl-L-alanyl-[protein] + CoA + H(+). The catalysed reaction is N-terminal L-seryl-[protein] + acetyl-CoA = N-terminal N(alpha)-acetyl-L-seryl-[protein] + CoA + H(+). It carries out the reaction N-terminal L-methionyl-L-leucyl-[protein] + acetyl-CoA = N-terminal N(alpha)-acetyl-L-methionyl-L-leucyl-[protein] + CoA + H(+). It catalyses the reaction N-terminal L-methionyl-L-glutamyl-[protein] + acetyl-CoA = N-terminal N(alpha)-acetyl-L-methionyl-L-glutamyl-[protein] + CoA + H(+). Its function is as follows. Displays alpha (N-terminal) acetyltransferase activity. Catalyzes the covalent attachment of an acetyl moiety from acetyl-CoA to the free alpha-amino group at the N-terminus of a protein. The sequence is that of N-alpha-acetyltransferase from Sulfurisphaera tokodaii (strain DSM 16993 / JCM 10545 / NBRC 100140 / 7) (Sulfolobus tokodaii).